Here is a 204-residue protein sequence, read N- to C-terminus: N-(5'-phosphoribosyl)anthranilate isomerase (204 aa).

Belongs to the TrpF family.

The catalysed reaction is N-(5-phospho-beta-D-ribosyl)anthranilate = 1-(2-carboxyphenylamino)-1-deoxy-D-ribulose 5-phosphate. The protein operates within amino-acid biosynthesis; L-tryptophan biosynthesis; L-tryptophan from chorismate: step 3/5. The protein is N-(5'-phosphoribosyl)anthranilate isomerase of Bacillus thuringiensis (strain Al Hakam).